The following is a 403-amino-acid chain: Cell cycle checkpoint control protein RAD9B (403 aa).

The segment at 285-347 (PLSQARRSHP…ASAGQDDIFE (63 aa)) is disordered. A phosphoserine mark is found at serine 354 and serine 363.

The protein belongs to the rad9 family. Interacts with HUS1, HUS1B, RAD1, RAD9A and RAD17.

This chain is Cell cycle checkpoint control protein RAD9B (Rad9b), found in Mus musculus (Mouse).